The primary structure comprises 356 residues: GATA zinc finger domain-containing protein 17 (356 aa).

Residues 91–119 (LKEFDALEASLNAELECLELQYSSDTSEL) are a coiled coil. Residues 158–188 (TASTSTSTPTNTTTTTTTTSNSLTKNNNSAL) show a composition bias toward low complexity. Residues 158–294 (TASTSTSTPT…DITEESKVKE (137 aa)) form a disordered region. A compositionally biased stretch (acidic residues) spans 206–228 (SSDDEEDDQKDDQDKDDSDEDNV). The segment covering 260-284 (TAITTTTTPITTTDSNIIGTTTTTD) has biased composition (low complexity). The segment at 304–331 (CYVCKVTETPYWRRGTDNGVVVDLCNEC) adopts a GATA-type zinc-finger fold.

The sequence is that of GATA zinc finger domain-containing protein 17 (gtaQ) from Dictyostelium discoideum (Social amoeba).